Here is a 196-residue protein sequence, read N- to C-terminus: Holliday junction branch migration complex subunit RuvA (196 aa).

The interval 1 to 61 is domain I; that stretch reads MYEYFEGIVT…DTGITLYGFQ (61 aa). The domain II stretch occupies residues 62 to 140; it reads SEDDKGLFLK…DYVARLDRQD (79 aa). The interval 141 to 149 is flexible linker; it reads EEQGNISPA. The interval 149-196 is domain III; it reads ALNDALLALIALGYTQKEVDRITTKLEEVNADTADQYIKKGLALLLKK.

It belongs to the RuvA family. In terms of assembly, homotetramer. Forms an RuvA(8)-RuvB(12)-Holliday junction (HJ) complex. HJ DNA is sandwiched between 2 RuvA tetramers; dsDNA enters through RuvA and exits via RuvB. An RuvB hexamer assembles on each DNA strand where it exits the tetramer. Each RuvB hexamer is contacted by two RuvA subunits (via domain III) on 2 adjacent RuvB subunits; this complex drives branch migration. In the full resolvosome a probable DNA-RuvA(4)-RuvB(12)-RuvC(2) complex forms which resolves the HJ.

It is found in the cytoplasm. The RuvA-RuvB-RuvC complex processes Holliday junction (HJ) DNA during genetic recombination and DNA repair, while the RuvA-RuvB complex plays an important role in the rescue of blocked DNA replication forks via replication fork reversal (RFR). RuvA specifically binds to HJ cruciform DNA, conferring on it an open structure. The RuvB hexamer acts as an ATP-dependent pump, pulling dsDNA into and through the RuvAB complex. HJ branch migration allows RuvC to scan DNA until it finds its consensus sequence, where it cleaves and resolves the cruciform DNA. The protein is Holliday junction branch migration complex subunit RuvA of Lactobacillus helveticus (strain DPC 4571).